A 245-amino-acid polypeptide reads, in one-letter code: MRKIRLTIEYDGTNYHGWQIQKNAKTVQEVIQKALSKLLGEDVGVTGCSRTDVGVHAYGQVAHFLTDSKIPGDKFSYAINNLLPDDIVIKNSEEVPEEFHARYSAKGKKYRYLIYNSPHASAIMRNRSCHVRPELNVAEMQKAAGYFKGEHDFLAFQATGGQVRSTVREIYGMEVYVKEDNMISIEVSGNGFLYNMVRIIAGTLIYVGMGKLHESEIPGIIAGLDRTKAGKTAPAQGLYLVQIYY.

Residue Asp-52 is the Nucleophile of the active site. Tyr-110 contacts substrate.

This sequence belongs to the tRNA pseudouridine synthase TruA family. Homodimer.

The catalysed reaction is uridine(38/39/40) in tRNA = pseudouridine(38/39/40) in tRNA. Functionally, formation of pseudouridine at positions 38, 39 and 40 in the anticodon stem and loop of transfer RNAs. This Ruminiclostridium cellulolyticum (strain ATCC 35319 / DSM 5812 / JCM 6584 / H10) (Clostridium cellulolyticum) protein is tRNA pseudouridine synthase A.